We begin with the raw amino-acid sequence, 338 residues long: tRNA N6-adenosine threonylcarbamoyltransferase (338 aa).

2 residues coordinate Fe cation: histidine 114 and histidine 118. Residues 136–140 (LVSGG), aspartate 169, glycine 182, aspartate 186, and asparagine 275 each bind substrate. Residue aspartate 301 coordinates Fe cation.

This sequence belongs to the KAE1 / TsaD family. Fe(2+) is required as a cofactor.

The protein localises to the cytoplasm. It catalyses the reaction L-threonylcarbamoyladenylate + adenosine(37) in tRNA = N(6)-L-threonylcarbamoyladenosine(37) in tRNA + AMP + H(+). Its function is as follows. Required for the formation of a threonylcarbamoyl group on adenosine at position 37 (t(6)A37) in tRNAs that read codons beginning with adenine. Is involved in the transfer of the threonylcarbamoyl moiety of threonylcarbamoyl-AMP (TC-AMP) to the N6 group of A37, together with TsaE and TsaB. TsaD likely plays a direct catalytic role in this reaction. The polypeptide is tRNA N6-adenosine threonylcarbamoyltransferase (Streptococcus equi subsp. zooepidemicus (strain MGCS10565)).